Here is a 291-residue protein sequence, read N- to C-terminus: MTTLAIDIGGTKLAAALIGADGQIRDRRELPTPASQTPEALREALAALVSPLQAHAQQVAIASTGIIRDGSLLALNPHNLGGLLHFPLVKTLEQLTDLPTIAINDAQAAAWAEYQGLEGDITDMVFITVSTGVGGGVVSGGKLLTGPGGLAGHIGHTLADPHGPVCGCGRTGCVEAIASGRGIAAAAQGELAGADAKAIFKRVGQGDEQAQQLIHRSARVLARLIADIKATTDCQCVVVGGSVGLAEGYLALVETYLAQEPAAFHVDLLAAHYRHDAGLLGAALLAQGEKL.

ATP contacts are provided by residues 5-12 and 132-139; these read AIDIGGTK and GVGGGVVS. Zn(2+) is bound by residues His-156, Cys-166, Cys-168, and Cys-173.

Belongs to the ROK (NagC/XylR) family. NanK subfamily. In terms of assembly, homodimer.

It catalyses the reaction an N-acyl-D-mannosamine + ATP = an N-acyl-D-mannosamine 6-phosphate + ADP + H(+). It functions in the pathway amino-sugar metabolism; N-acetylneuraminate degradation; D-fructose 6-phosphate from N-acetylneuraminate: step 2/5. Catalyzes the phosphorylation of N-acetylmannosamine (ManNAc) to ManNAc-6-P. This chain is N-acetylmannosamine kinase, found in Escherichia fergusonii (strain ATCC 35469 / DSM 13698 / CCUG 18766 / IAM 14443 / JCM 21226 / LMG 7866 / NBRC 102419 / NCTC 12128 / CDC 0568-73).